Here is a 198-residue protein sequence, read N- to C-terminus: T-cell surface glycoprotein CD3 epsilon chain (198 aa).

The N-terminal stretch at M1–G21 is a signal peptide. Over Q22 to T120 the chain is Extracellular. Residues A28–K106 form the Ig-like domain. Residues C49 and C90 are joined by a disulfide bond. The helical transmembrane segment at V121–Y141 threads the bilayer. At W142–I198 the chain is on the cytoplasmic side. The tract at residues V153 to I198 is disordered. The NUMB-binding region stretch occupies residues Q166 to R183. One can recognise an ITAM domain in the interval E169–R196. Residues R170 to P177 are proline-rich sequence. 2 positions are modified to phosphotyrosine: Y179 and Y190.

As to quaternary structure, the TCR-CD3 complex is composed of a CD3D/CD3E and a CD3G/CD3E heterodimers that preferentially associate with TCRalpha and TCRbeta, respectively, to form TCRalpha/CD3E/CD3G and TCRbeta/CD3G/CD3E trimers. In turn, the hexamer interacts with CD3Z homodimer to form the TCR-CD3 complex. Alternatively, TCRalpha and TCRbeta can be replaced by TCRgamma and TCRdelta. Interacts with CD6. Interacts (via Proline-rich sequence) with NCK1; the interaction is ligand dependent but independent of tyrosine kinase activation. Post-translationally, phosphorylated on Tyr residues after T-cell receptor triggering by LCK in association with CD4/CD8.

It localises to the cell membrane. Functionally, part of the TCR-CD3 complex present on T-lymphocyte cell surface that plays an essential role in adaptive immune response. When antigen presenting cells (APCs) activate T-cell receptor (TCR), TCR-mediated signals are transmitted across the cell membrane by the CD3 chains CD3D, CD3E, CD3G and CD3Z. All CD3 chains contain immunoreceptor tyrosine-based activation motifs (ITAMs) in their cytoplasmic domain. Upon TCR engagement, these motifs become phosphorylated by Src family protein tyrosine kinases LCK and FYN, resulting in the activation of downstream signaling pathways. In addition of this role of signal transduction in T-cell activation, CD3E plays an essential role in correct T-cell development. Also participates in internalization and cell surface down-regulation of TCR-CD3 complexes via endocytosis sequences present in CD3E cytosolic region. In addition to its role as a TCR coreceptor, it serves as a receptor for ITPRIPL1. Ligand recognition inhibits T-cell activation by promoting interaction with NCK1, which prevents CD3E-ZAP70 interaction and blocks the ERK-NFkB signaling cascade and calcium influx. The chain is T-cell surface glycoprotein CD3 epsilon chain (CD3E) from Oryctolagus cuniculus (Rabbit).